The chain runs to 575 residues: Arginine--tRNA ligase (575 aa).

Residues 131–141 (ANPTGPLHVGH) carry the 'HIGH' region motif.

It belongs to the class-I aminoacyl-tRNA synthetase family. In terms of assembly, monomer.

The protein localises to the cytoplasm. It catalyses the reaction tRNA(Arg) + L-arginine + ATP = L-arginyl-tRNA(Arg) + AMP + diphosphate. The chain is Arginine--tRNA ligase from Jannaschia sp. (strain CCS1).